Reading from the N-terminus, the 113-residue chain is U11-theraphotoxin-Hhn1r (113 aa).

The signal sequence occupies residues 1–21 (MNTVRVTFLLVFVLAVSLGQA). Positions 22-74 (DKDENRMEMQEKTEQGKSYLDFAENLLLQKLEELEAKLLEEDSEESRNSRQKR) are excised as a propeptide. The segment at 61–83 (EEDSEESRNSRQKRCIGEGVPCD) is disordered. 3 disulfide bridges follow: Cys-75-Cys-90, Cys-82-Cys-95, and Cys-89-Cys-110.

Belongs to the neurotoxin 14 (magi-1) family. 01 (HNTX-16) subfamily. In terms of tissue distribution, expressed by the venom gland.

It is found in the secreted. Probable ion channel inhibitor. The chain is U11-theraphotoxin-Hhn1r from Cyriopagopus hainanus (Chinese bird spider).